The following is a 545-amino-acid chain: Acetamidase (545 aa).

Active-site charge relay system residues include lysine 130 and serine 205. Catalysis depends on serine 229, which acts as the Acyl-ester intermediate.

The protein belongs to the amidase family.

The enzyme catalyses a monocarboxylic acid amide + H2O = a monocarboxylate + NH4(+). The catalysed reaction is acetamide + H2O = acetate + NH4(+). Its function is as follows. Allows acetamide to be used as a sole carbon or nitrogen source. The protein is Acetamidase (amdS) of Aspergillus oryzae (strain ATCC 42149 / RIB 40) (Yellow koji mold).